We begin with the raw amino-acid sequence, 267 residues long: Lectin SfL-1 (267 aa).

4 tandem repeats follow at residues 1-67 (GRYT…RRGD), 68-135 (SNNY…QSGG), 136-202 (DSYN…STGG), and 203-267 (SNYK…GTAI). The interval 1 to 267 (GRYTVQNQWG…GPIGFKGTAI (267 aa)) is 4 X approximate tandem repeats.

As to quaternary structure, monomer.

Lectin specific for high mannose N-glycans, recognizes the branched moiety of these glycans. Does not recognize other types of N-glycans or monosaccharides. In Solieria filiformis (Red alga), this protein is Lectin SfL-1.